Reading from the N-terminus, the 607-residue chain is Chaperone protein DnaK (607 aa).

At Thr-174 the chain carries Phosphothreonine; by autocatalysis. Residues 579-592 show a composition bias toward low complexity; sequence AQAQAQQQAGANAG. Residues 579 to 607 form a disordered region; that stretch reads AQAQAQQQAGANAGSDKKDEDVAEAEVVD.

Belongs to the heat shock protein 70 family.

Functionally, acts as a chaperone. The polypeptide is Chaperone protein DnaK (Fusobacterium nucleatum subsp. nucleatum (strain ATCC 25586 / DSM 15643 / BCRC 10681 / CIP 101130 / JCM 8532 / KCTC 2640 / LMG 13131 / VPI 4355)).